The primary structure comprises 260 residues: UPF0246 protein Bmul_1054/BMULJ_02209 (260 aa).

The protein belongs to the UPF0246 family.

This chain is UPF0246 protein Bmul_1054/BMULJ_02209, found in Burkholderia multivorans (strain ATCC 17616 / 249).